The sequence spans 963 residues: MVGCGVAVLCLWVSCGAAAGQLEYSVPEETERGVAVGNLSADLRLPAAAMSSRNFRFLSSHRELYFGVDLPSGNLVVREPADREQLCRAKAACVLTYDLVLEDPLELHKIRIHVLDTNDNSPLFPAGDVQLHIPEFLTPGARFTLPNAQDDDEGSNGILSYSLSPSQHFRLDMGSRVDGSEYPELVLEKALDREQRATHLLVLTARDGGLPARSGDAQVTIIVVDTNDNAPVFERSVYRTKVPETAPNGTVLFRVQALDPDEGSNGEVQYSLSNSTQAELRHRFHVHPKSGEVQVAASLGPPETLLEAYIEARDEGVFGLASTAKLLVEVTDVNDHAPELDFLTLSNPVPEDAAPGTVIALFSVKDEDLDSNGRVICGMSSAGPFQLTASFDNYYSLLIDGPLDREQISEYQVLITASDSGSPPLSTRRTITVSVADVNDNTPNFPQPQQELFVAENNGPGASLGRVFAQDPDLGKNGLVSYELLDVISEGPSASSLLAVESSSGAITAKTSFDFEQLRGFHFQVEGRDGGIPPRSATVTINLFVVDRNDNYPVILFPLPRNGSVPVEIVPRSARTGHLVTKVVAEDADSGSNAWLSYHISRASDSSLFRISANIGELRTARLVLPTDAVKQRVVVVVRDHGDPPLSSSVTLGVLLSNSVPQLLPDFEDVWEPGGQLSAQNLYLVIALACISFLFLGCLLFFVCTKLHQSPGCCAQSCCRSTEDLRYGSKMVSNPCMTSATIDVTTVERLSQTYLYRASLGLGSDNNSLLLRGEYNAADLRNLATGVGLNLPISCIQIRNRKGDHANVNAMPRQPNPDWRYSASLRAGMHSSVHLEEAGILRAGPGGPDQQWPTVSSATPEPEAGEVSPPVGAGVNSNSWTFKYGPGNPKQSGPGELPDKFIIPGSPAIISIRQEPTNSQIDKSDFITFGKKEETKKKKKKKKGNKTQEKKEKGNSTTDNSDQ.

Residues 1–18 (MVGCGVAVLCLWVSCGAA) form the signal peptide. Cadherin domains are found at residues 19 to 124 (AGQL…SPLF), 125 to 233 (PAGD…APVF), 234 to 340 (ERSV…APEL), 349 to 445 (VPED…TPNF), and 446 to 555 (PQPQ…YPVI). The Extracellular portion of the chain corresponds to 19–683 (AGQLEYSVPE…GGQLSAQNLY (665 aa)). Asn38 carries N-linked (GlcNAc...) asparagine glycosylation. Asn248 and Asn274 each carry an N-linked (GlcNAc...) asparagine glycan. A glycan (N-linked (GlcNAc...) asparagine) is linked at Asn562. The Cadherin 6 domain maps to 570 to 667 (VPRSARTGHL…NSVPQLLPDF (98 aa)). A helical membrane pass occupies residues 684 to 704 (LVIALACISFLFLGCLLFFVC). Over 705-963 (TKLHQSPGCC…GNSTTDNSDQ (259 aa)) the chain is Cytoplasmic. 4 PXXP repeats span residues 812 to 815 (PRQP), 845 to 848 (PGGP), 886 to 889 (PGNP), and 904 to 907 (PGSP). The segment at 812–907 (PRQPNPDWRY…PDKFIIPGSP (96 aa)) is 4 X 4 AA repeats of P-X-X-P. Residues 844–963 (GPGGPDQQWP…GNSTTDNSDQ (120 aa)) are disordered. Over residues 922 to 936 (DKSDFITFGKKEETK) the composition is skewed to basic and acidic residues.

The protein resides in the cell membrane. Functionally, potential calcium-dependent cell-adhesion protein. May be involved in the establishment and maintenance of specific neuronal connections in the brain. In Homo sapiens (Human), this protein is Protocadherin alpha-C1 (PCDHAC1).